A 150-amino-acid chain; its full sequence is D-aminoacyl-tRNA deacylase (150 aa).

Residues 140–141 (GP) carry the Gly-cisPro motif, important for rejection of L-amino acids motif.

Belongs to the DTD family. As to quaternary structure, homodimer.

It localises to the cytoplasm. It carries out the reaction glycyl-tRNA(Ala) + H2O = tRNA(Ala) + glycine + H(+). The enzyme catalyses a D-aminoacyl-tRNA + H2O = a tRNA + a D-alpha-amino acid + H(+). It catalyses the reaction D-tyrosyl-tRNA(Tyr) + H2O = D-tyrosine + tRNA(Tyr). In terms of biological role, an aminoacyl-tRNA editing enzyme that deacylates mischarged D-aminoacyl-tRNAs. Hydrolyzes D-tyrosyl-tRNA(Tyr) into D-tyrosine and free tRNA(Tyr). May also deacylate mischarged D-leucyl-tRNA(Leu). Also deacylates mischarged glycyl-tRNA(Ala), protecting cells against glycine mischarging by AlaRS. Acts via tRNA-based rather than protein-based catalysis; rejects L-amino acids rather than detecting D-amino acids in the active site. By recycling D-aminoacyl-tRNA to D-amino acids and free tRNA molecules, this enzyme counteracts the toxicity associated with the formation of D-aminoacyl-tRNA entities in vivo and helps enforce protein L-homochirality. The protein is D-aminoacyl-tRNA deacylase of Saccharomyces cerevisiae (strain ATCC 204508 / S288c) (Baker's yeast).